Reading from the N-terminus, the 459-residue chain is NADH oxidase (459 aa).

N10 lines the FAD pocket. H11 serves as the catalytic Proton acceptor. Residues A12, D34, Q35, C44, V81, A110, S113, K143, and Y172 each contribute to the FAD site. C44 acts as the Redox-active in catalysis. C44 is subject to Cysteine sulfinic acid (-SO2H). I173, D192, Y201, and G256 together coordinate NAD(+). D294 provides a ligand contact to FAD. Residue A310 participates in NAD(+) binding. Residues L311, A312, and S313 each contribute to the FAD site. G341 contributes to the NAD(+) binding site. FAD is bound at residue F439.

The protein belongs to the class-III pyridine nucleotide-disulfide oxidoreductase family. Requires FAD as cofactor.

It is found in the secreted. Its subcellular location is the cell wall. It carries out the reaction 2 NADH + O2 + 2 H(+) = 2 NAD(+) + 2 H2O. Its function is as follows. Catalyzes the four-electron reduction of molecular oxygen to water. Plays a role in redox balance maintenance. May be involved in mediating bacterial adhesion to host cells. May be considered a potential virulence factor. In Streptococcus pneumoniae serotype 4 (strain ATCC BAA-334 / TIGR4), this protein is NADH oxidase.